We begin with the raw amino-acid sequence, 557 residues long: Arginine--tRNA ligase (557 aa).

The 'HIGH' region motif lies at 132–142; the sequence is ANPTGDLHLGH.

This sequence belongs to the class-I aminoacyl-tRNA synthetase family. As to quaternary structure, monomer.

It localises to the cytoplasm. It carries out the reaction tRNA(Arg) + L-arginine + ATP = L-arginyl-tRNA(Arg) + AMP + diphosphate. This Geobacillus kaustophilus (strain HTA426) protein is Arginine--tRNA ligase.